The primary structure comprises 216 residues: Deoxyribose-phosphate aldolase (216 aa).

Aspartate 89 functions as the Proton donor/acceptor in the catalytic mechanism. Residue lysine 152 is the Schiff-base intermediate with acetaldehyde of the active site. Catalysis depends on lysine 181, which acts as the Proton donor/acceptor.

Belongs to the DeoC/FbaB aldolase family. DeoC type 1 subfamily.

The protein localises to the cytoplasm. It carries out the reaction 2-deoxy-D-ribose 5-phosphate = D-glyceraldehyde 3-phosphate + acetaldehyde. The protein operates within carbohydrate degradation; 2-deoxy-D-ribose 1-phosphate degradation; D-glyceraldehyde 3-phosphate and acetaldehyde from 2-deoxy-alpha-D-ribose 1-phosphate: step 2/2. In terms of biological role, catalyzes a reversible aldol reaction between acetaldehyde and D-glyceraldehyde 3-phosphate to generate 2-deoxy-D-ribose 5-phosphate. The polypeptide is Deoxyribose-phosphate aldolase (Clostridium tetani (strain Massachusetts / E88)).